A 195-amino-acid chain; its full sequence is Imidazoleglycerol-phosphate dehydratase (195 aa).

The protein belongs to the imidazoleglycerol-phosphate dehydratase family.

It localises to the cytoplasm. The catalysed reaction is D-erythro-1-(imidazol-4-yl)glycerol 3-phosphate = 3-(imidazol-4-yl)-2-oxopropyl phosphate + H2O. It participates in amino-acid biosynthesis; L-histidine biosynthesis; L-histidine from 5-phospho-alpha-D-ribose 1-diphosphate: step 6/9. This Pelobacter propionicus (strain DSM 2379 / NBRC 103807 / OttBd1) protein is Imidazoleglycerol-phosphate dehydratase.